The sequence spans 469 residues: C4b-binding protein (469 aa).

Positions 1-56 are cleaved as a signal peptide; it reads MCAKQQQTLLPTRAAHGRLHRNRDAVAWPFSTLCRVSGPTLFQMTFTAALWVAVFG. 6 Sushi domains span residues 57 to 117, 118 to 178, 179 to 242, 243 to 301, 302 to 357, and 358 to 415; these read KCGP…SCAK, KHCR…ECVI, VKCG…TCEK, IICS…TCEF, DCDL…QCKA, and LCQK…RCEQ. 12 cysteine pairs are disulfide-bonded: Cys58–Cys103, Cys88–Cys115, Cys120–Cys160, Cys146–Cys176, Cys181–Cys223, Cys209–Cys240, Cys245–Cys287, Cys273–Cys299, Cys303–Cys343, Cys329–Cys355, Cys359–Cys400, and Cys386–Cys413. An N-linked (GlcNAc...) asparagine glycan is attached at Asn74. Residues Asn227, Asn275, and Asn292 are each glycosylated (N-linked (GlcNAc...) asparagine). N-linked (GlcNAc...) asparagine glycosylation is found at Asn366 and Asn381. N-linked (GlcNAc...) asparagine glycosylation occurs at Asn428.

Homoheptamer; not covalently linked. Mouse lacks the beta chain of C4BP.

The protein localises to the secreted. Functionally, controls the classical pathway of complement activation. It binds as a cofactor to C3b/C4b inactivator (C3bINA), which then hydrolyzes the complement fragment C4b. It also accelerates the degradation of the C4bC2a complex (C3 convertase) by dissociating the complement fragment C2a. Alpha chain binds C4b. It also interacts with serum amyloid P component. This chain is C4b-binding protein (C4bpa), found in Mus musculus (Mouse).